Reading from the N-terminus, the 101-residue chain is Small ribosomal subunit protein uS14 (101 aa).

This sequence belongs to the universal ribosomal protein uS14 family. Part of the 30S ribosomal subunit. Contacts proteins S3 and S10.

Binds 16S rRNA, required for the assembly of 30S particles and may also be responsible for determining the conformation of the 16S rRNA at the A site. In Shewanella woodyi (strain ATCC 51908 / MS32), this protein is Small ribosomal subunit protein uS14.